The sequence spans 276 residues: ATP synthase subunit a (276 aa).

Helical transmembrane passes span Trp47–Tyr67, Ile107–Ile127, Asp152–Ile172, Pro188–Ala208, Leu226–Trp246, and Ala247–Val267.

Belongs to the ATPase A chain family. As to quaternary structure, F-type ATPases have 2 components, CF(1) - the catalytic core - and CF(0) - the membrane proton channel. CF(1) has five subunits: alpha(3), beta(3), gamma(1), delta(1), epsilon(1). CF(0) has three main subunits: a(1), b(2) and c(9-12). The alpha and beta chains form an alternating ring which encloses part of the gamma chain. CF(1) is attached to CF(0) by a central stalk formed by the gamma and epsilon chains, while a peripheral stalk is formed by the delta and b chains.

The protein localises to the cell inner membrane. Its function is as follows. Key component of the proton channel; it plays a direct role in the translocation of protons across the membrane. The protein is ATP synthase subunit a of Shewanella halifaxensis (strain HAW-EB4).